The sequence spans 479 residues: Aspartyl/glutamyl-tRNA(Asn/Gln) amidotransferase subunit B (479 aa).

The protein belongs to the GatB/GatE family. GatB subfamily. As to quaternary structure, heterotrimer of A, B and C subunits.

The catalysed reaction is L-glutamyl-tRNA(Gln) + L-glutamine + ATP + H2O = L-glutaminyl-tRNA(Gln) + L-glutamate + ADP + phosphate + H(+). It catalyses the reaction L-aspartyl-tRNA(Asn) + L-glutamine + ATP + H2O = L-asparaginyl-tRNA(Asn) + L-glutamate + ADP + phosphate + 2 H(+). Functionally, allows the formation of correctly charged Asn-tRNA(Asn) or Gln-tRNA(Gln) through the transamidation of misacylated Asp-tRNA(Asn) or Glu-tRNA(Gln) in organisms which lack either or both of asparaginyl-tRNA or glutaminyl-tRNA synthetases. The reaction takes place in the presence of glutamine and ATP through an activated phospho-Asp-tRNA(Asn) or phospho-Glu-tRNA(Gln). This chain is Aspartyl/glutamyl-tRNA(Asn/Gln) amidotransferase subunit B, found in Streptococcus pyogenes serotype M1.